The primary structure comprises 914 residues: Isoleucine--tRNA ligase (914 aa).

The 'HIGH' region motif lies at 64–74; that stretch reads PYANGNFHLGH. Glu-557 contributes to the L-isoleucyl-5'-AMP binding site. Residues 598–602 carry the 'KMSKS' region motif; it reads AMSKS. Residue Lys-601 coordinates ATP. Positions 889, 892, 906, and 909 each coordinate Zn(2+).

The protein belongs to the class-I aminoacyl-tRNA synthetase family. IleS type 1 subfamily. As to quaternary structure, monomer. It depends on Zn(2+) as a cofactor.

The protein localises to the cytoplasm. The catalysed reaction is tRNA(Ile) + L-isoleucine + ATP = L-isoleucyl-tRNA(Ile) + AMP + diphosphate. Its function is as follows. Catalyzes the attachment of isoleucine to tRNA(Ile). As IleRS can inadvertently accommodate and process structurally similar amino acids such as valine, to avoid such errors it has two additional distinct tRNA(Ile)-dependent editing activities. One activity is designated as 'pretransfer' editing and involves the hydrolysis of activated Val-AMP. The other activity is designated 'posttransfer' editing and involves deacylation of mischarged Val-tRNA(Ile). The polypeptide is Isoleucine--tRNA ligase (Leptospira borgpetersenii serovar Hardjo-bovis (strain JB197)).